A 218-amino-acid polypeptide reads, in one-letter code: Ras-related protein Rab11E (218 aa).

Residue 20 to 27 (GDSGVGKS) coordinates GTP. An Effector region motif is present at residues 42–50 (SKSTIGVEF). Residues 68–72 (DTAGQ) and 126–129 (NKSD) contribute to the GTP site. S-geranylgeranyl cysteine attachment occurs at residues Cys-215 and Cys-216.

Belongs to the small GTPase superfamily. Rab family.

It localises to the cell membrane. This is Ras-related protein Rab11E (RAB11E) from Lotus japonicus (Lotus corniculatus var. japonicus).